A 201-amino-acid polypeptide reads, in one-letter code: Small ribosomal subunit protein uS4c (201 aa).

A disordered region spans residues Ser23–Ser42. Residues Met89 to Tyr151 form the S4 RNA-binding domain.

This sequence belongs to the universal ribosomal protein uS4 family. Part of the 30S ribosomal subunit. Contacts protein S5. The interaction surface between S4 and S5 is involved in control of translational fidelity.

It localises to the plastid. The protein localises to the chloroplast. Its function is as follows. One of the primary rRNA binding proteins, it binds directly to 16S rRNA where it nucleates assembly of the body of the 30S subunit. Functionally, with S5 and S12 plays an important role in translational accuracy. This is Small ribosomal subunit protein uS4c (rps4) from Morus indica (Mulberry).